Consider the following 1003-residue polypeptide: DNA topoisomerase 3-alpha (1003 aa).

One can recognise a Toprim domain in the interval 35–179; the sequence is KVLCVAEKND…NLRVLRARFS (145 aa). The Topo IA-type catalytic domain occupies 197–617; that stretch reads DQRVSDAVDV…QQVQKYKQVF (421 aa). Tyrosine 362 serves as the catalytic O-(5'-phospho-DNA)-tyrosine intermediate. The segment at 400–426 is disordered; it reads GGPTPRNGSKSDQAHPPIHPTKYTSGL. Residues 658–685 form a C4-type zinc finger; that stretch reads CPQCNKDMVLKTKKSGGFYLSCMGFPEC. Zn(2+)-binding residues include cysteine 815, cysteine 817, cysteine 840, and cysteine 845. The GRF-type 1 zinc finger occupies 815 to 854; sequence CNCGREAVLLTVRKQGPNQGRHFYKCSNGDCNFFLWADSS. The tract at residues 856–888 is disordered; the sequence is STGGGTPTSASGPPGSSVGCPSSVGSHMDGFGS. The span at 862–888 shows a compositional bias: low complexity; it reads PTSASGPPGSSVGCPSSVGSHMDGFGS. Zn(2+) contacts are provided by cysteine 899, cysteine 901, cysteine 924, and cysteine 932. Residues 899 to 941 form a GRF-type 2 zinc finger; sequence CLCGQPAVTRTVQKDGPNKGRQFHTCAKPREQQCGFFQWVDEN. The interval 946–991 is disordered; sequence SFAAPAWPGGRGKAQRPEAASKRPRAGSSDAGSTVKKPRKCSLCHQ.

The protein belongs to the type IA topoisomerase family. In terms of assembly, binds ssDNA. Interacts (via N-terminal region) with BLM; the interaction is direct. Directly interacts with RMI1. Component of the RMI complex, containing at least TOP3A, RMI1 and RMI2. The RMI complex interacts with BLM. Requires Mg(2+) as cofactor. In terms of tissue distribution, highly expressed in testis.

It localises to the mitochondrion matrix. It carries out the reaction ATP-independent breakage of single-stranded DNA, followed by passage and rejoining.. In terms of biological role, releases the supercoiling and torsional tension of DNA introduced during the DNA replication and transcription by transiently cleaving and rejoining one strand of the DNA duplex. Introduces a single-strand break via transesterification at a target site in duplex DNA. The scissile phosphodiester is attacked by the catalytic tyrosine of the enzyme, resulting in the formation of a DNA-(5'-phosphotyrosyl)-enzyme intermediate and the expulsion of a 3'-OH DNA strand. The free DNA strand then undergoes passage around the unbroken strand thus removing DNA supercoils. Finally, in the religation step, the DNA 3'-OH attacks the covalent intermediate to expel the active-site tyrosine and restore the DNA phosphodiester backbone. As an essential component of the RMI complex it is involved in chromosome separation and the processing of homologous recombination intermediates to limit DNA crossover formation in cells. Has DNA decatenation activity. It is required for mtDNA decatenation and segregation after completion of replication, in a process that does not require BLM, RMI1 and RMI2. This Mus musculus (Mouse) protein is DNA topoisomerase 3-alpha (Top3a).